We begin with the raw amino-acid sequence, 310 residues long: Oxygen-dependent coproporphyrinogen-III oxidase (310 aa).

Residue Ser92 coordinates substrate. A divalent metal cation contacts are provided by His96 and His106. His106 functions as the Proton donor in the catalytic mechanism. 108-110 (NVR) contacts substrate. Residues His145 and His175 each contribute to the a divalent metal cation site. The important for dimerization stretch occupies residues 240 to 275 (YVEFNLIWDRGTLFGLQSGGRTESILMSMPPLARWE). A substrate-binding site is contributed by 258–260 (GGR).

Belongs to the aerobic coproporphyrinogen-III oxidase family. As to quaternary structure, homodimer. A divalent metal cation serves as cofactor.

The protein resides in the cytoplasm. It catalyses the reaction coproporphyrinogen III + O2 + 2 H(+) = protoporphyrinogen IX + 2 CO2 + 2 H2O. The protein operates within porphyrin-containing compound metabolism; protoporphyrin-IX biosynthesis; protoporphyrinogen-IX from coproporphyrinogen-III (O2 route): step 1/1. In terms of biological role, involved in the heme biosynthesis. Catalyzes the aerobic oxidative decarboxylation of propionate groups of rings A and B of coproporphyrinogen-III to yield the vinyl groups in protoporphyrinogen-IX. This is Oxygen-dependent coproporphyrinogen-III oxidase from Pectobacterium carotovorum subsp. carotovorum (strain PC1).